We begin with the raw amino-acid sequence, 135 residues long: Putative pre-16S rRNA nuclease (135 aa).

It belongs to the YqgF nuclease family.

The protein resides in the cytoplasm. Could be a nuclease involved in processing of the 5'-end of pre-16S rRNA. The polypeptide is Putative pre-16S rRNA nuclease (Clostridium novyi (strain NT)).